The sequence spans 259 residues: NAD(P)H-quinone oxidoreductase subunit K 2 (259 aa).

[4Fe-4S] cluster-binding residues include Cys-52, Cys-53, Cys-117, and Cys-148.

This sequence belongs to the complex I 20 kDa subunit family. As to quaternary structure, NDH-1 can be composed of about 15 different subunits; different subcomplexes with different compositions have been identified which probably have different functions. [4Fe-4S] cluster is required as a cofactor.

The protein localises to the cellular thylakoid membrane. The enzyme catalyses a plastoquinone + NADH + (n+1) H(+)(in) = a plastoquinol + NAD(+) + n H(+)(out). It catalyses the reaction a plastoquinone + NADPH + (n+1) H(+)(in) = a plastoquinol + NADP(+) + n H(+)(out). In terms of biological role, NDH-1 shuttles electrons from an unknown electron donor, via FMN and iron-sulfur (Fe-S) centers, to quinones in the respiratory and/or the photosynthetic chain. The immediate electron acceptor for the enzyme in this species is believed to be plastoquinone. Couples the redox reaction to proton translocation, and thus conserves the redox energy in a proton gradient. Cyanobacterial NDH-1 also plays a role in inorganic carbon-concentration. The sequence is that of NAD(P)H-quinone oxidoreductase subunit K 2 (ndhK2) from Cyanothece sp. (strain PCC 7425 / ATCC 29141).